Here is a 158-residue protein sequence, read N- to C-terminus: Phosphopantetheine adenylyltransferase (158 aa).

Residue T10 coordinates substrate. Residues 10-11 (TF) and H18 contribute to the ATP site. Substrate-binding residues include K42, L74, and R88. Residues 89-91 (GLR), E99, and 124-130 (NSFISST) each bind ATP.

The protein belongs to the bacterial CoaD family. As to quaternary structure, homohexamer. It depends on Mg(2+) as a cofactor.

Its subcellular location is the cytoplasm. It carries out the reaction (R)-4'-phosphopantetheine + ATP + H(+) = 3'-dephospho-CoA + diphosphate. It functions in the pathway cofactor biosynthesis; coenzyme A biosynthesis; CoA from (R)-pantothenate: step 4/5. Reversibly transfers an adenylyl group from ATP to 4'-phosphopantetheine, yielding dephospho-CoA (dPCoA) and pyrophosphate. In Shewanella sediminis (strain HAW-EB3), this protein is Phosphopantetheine adenylyltransferase.